The chain runs to 188 residues: Elongation factor P (188 aa).

The protein belongs to the elongation factor P family.

It localises to the cytoplasm. Its pathway is protein biosynthesis; polypeptide chain elongation. Involved in peptide bond synthesis. Stimulates efficient translation and peptide-bond synthesis on native or reconstituted 70S ribosomes in vitro. Probably functions indirectly by altering the affinity of the ribosome for aminoacyl-tRNA, thus increasing their reactivity as acceptors for peptidyl transferase. This Paramagnetospirillum magneticum (strain ATCC 700264 / AMB-1) (Magnetospirillum magneticum) protein is Elongation factor P.